A 153-amino-acid polypeptide reads, in one-letter code: ATP synthase subunit b' (153 aa).

A helical transmembrane segment spans residues 23–40 (LMAIQVVALTYILNSLFF).

This sequence belongs to the ATPase B chain family. As to quaternary structure, F-type ATPases have 2 components, F(1) - the catalytic core - and F(0) - the membrane proton channel. F(1) has five subunits: alpha(3), beta(3), gamma(1), delta(1), epsilon(1). F(0) has four main subunits: a(1), b(1), b'(1) and c(10-14). The alpha and beta chains form an alternating ring which encloses part of the gamma chain. F(1) is attached to F(0) by a central stalk formed by the gamma and epsilon chains, while a peripheral stalk is formed by the delta, b and b' chains.

It is found in the cellular thylakoid membrane. Its function is as follows. F(1)F(0) ATP synthase produces ATP from ADP in the presence of a proton or sodium gradient. F-type ATPases consist of two structural domains, F(1) containing the extramembraneous catalytic core and F(0) containing the membrane proton channel, linked together by a central stalk and a peripheral stalk. During catalysis, ATP synthesis in the catalytic domain of F(1) is coupled via a rotary mechanism of the central stalk subunits to proton translocation. Component of the F(0) channel, it forms part of the peripheral stalk, linking F(1) to F(0). The b'-subunit is a diverged and duplicated form of b found in plants and photosynthetic bacteria. The polypeptide is ATP synthase subunit b' (Prochlorococcus marinus (strain MIT 9515)).